An 832-amino-acid polypeptide reads, in one-letter code: Prickle-like protein 1-B (832 aa).

Residues 14–122 (FGCQRSSTSD…NIKMLSRAVM (109 aa)) enclose the PET domain. 3 LIM zinc-binding domains span residues 124–188 (AMCE…ELLK), 189–249 (PRCS…HYAE), and 250–313 (YCES…EDVH). Disordered stretches follow at residues 312–346 (VHAS…ADQC), 428–455 (QQPS…QRNN), 602–701 (ICQE…KERN), and 766–832 (CSSS…CIIS). Composition is skewed to basic and acidic residues over residues 432-453 (EDNR…DLQR) and 603-614 (CQEKPPPEEKPM). 2 stretches are compositionally biased toward basic residues: residues 669–680 (RPHHHRRRKSRK) and 816–832 (TKSK…CIIS). C829 carries the post-translational modification Cysteine methyl ester. A lipid anchor (S-farnesyl cysteine) is attached at C829. Residues 830–832 (IIS) constitute a propeptide, removed in mature form.

This sequence belongs to the prickle / espinas / testin family. As to quaternary structure, interacts with dvl2/dsh and mapk8/jnk1. As to expression, expressed in the dorsal marginal zone of early gastrulae (stage 10). As gastrulation proceeds, expression expands to include the lateral and ventral marginal zones, excluding the few rows of cells above the blastopore lip. Expression moves dorsally with gastrulation cell movements, and by the end of gastrulation expression is seen in dorsal mesoderm and posterior but not anterior neural ectoderm. Expression becomes down-regulated in mesoderm but remains strong in posterior ectoderm through the neurula stages. During tailbud stages, expressed in the pronephric duct, tailbud, tailtip and forming somites. In the most posterior regions, expressed in notochord and in the floorplate of the neural tube with weak expression in the roofplate. At stage 30, expressed in a complex pattern in the head including strong expression in the lens and otic vesicle.

The protein resides in the cell membrane. Functionally, acts in a planar cell polarity (PCP) complex; polarization along the apical/basal axis of epithelial cells. Regulates the polarized assembly of fibronectrin on the surface of the mesoderm during gastrulation. Essential for gastrulation cell movements, cooperating with dvl2/dsh to activate jnk. Acts together with tes to control axial elongation. This Xenopus laevis (African clawed frog) protein is Prickle-like protein 1-B (prickle1-b).